The primary structure comprises 329 residues: Methionyl-tRNA formyltransferase (329 aa).

117-120 lines the (6S)-5,6,7,8-tetrahydrofolate pocket; that stretch reads SLLP.

Belongs to the Fmt family.

It carries out the reaction L-methionyl-tRNA(fMet) + (6R)-10-formyltetrahydrofolate = N-formyl-L-methionyl-tRNA(fMet) + (6S)-5,6,7,8-tetrahydrofolate + H(+). Attaches a formyl group to the free amino group of methionyl-tRNA(fMet). The formyl group appears to play a dual role in the initiator identity of N-formylmethionyl-tRNA by promoting its recognition by IF2 and preventing the misappropriation of this tRNA by the elongation apparatus. The sequence is that of Methionyl-tRNA formyltransferase from Paracidovorax citrulli (strain AAC00-1) (Acidovorax citrulli).